The primary structure comprises 78 residues: Putative membrane protein insertion efficiency factor (78 aa).

Belongs to the UPF0161 family.

It is found in the cell membrane. Its function is as follows. Could be involved in insertion of integral membrane proteins into the membrane. In Bacillus thuringiensis subsp. konkukian (strain 97-27), this protein is Putative membrane protein insertion efficiency factor.